We begin with the raw amino-acid sequence, 869 residues long: Rho GTPase-activating protein 27 (869 aa).

The region spanning 6–69 (EGDVYVLVEH…PAQYVRELPA (64 aa)) is the SH3 domain. Positions 104–137 (GADGSSAEPRGRASSLCGPARQRTSGQRNSLAPG) are disordered. Residues Ser155, Ser215, and Ser249 each carry the phosphoserine modification. 2 consecutive WW domains span residues 246 to 280 (PRLS…SPFE) and 299 to 333 (ESLE…DETE). Disordered regions lie at residues 275–299 (WESP…GSGE), 331–389 (ETEE…DLGP), and 447–474 (VPVP…PEEK). Residues 331-343 (ETEELEDDPEEQL) are compositionally biased toward acidic residues. The segment covering 345-356 (MQPSLSPRSPGQ) has biased composition (polar residues). Ser350 is subject to Phosphoserine. The WW 3 domain maps to 414–447 (QFTQEQWVRLEDQEGKPYFYNPEDSSVQWELPQV). 2 positions are modified to phosphoserine: Ser459 and Ser462. At Thr464 the chain carries Phosphothreonine. Position 469 is a phosphoserine (Ser469). Residues 477-593 (TLDKAGVLHR…WHKAIAEGIE (117 aa)) enclose the PH domain. The tract at residues 598 to 644 (DLPQREEGEPSSADFGSSERLGSWKEEDVRPNAASPSLNPGSQESDL) is disordered. Positions 631–642 (ASPSLNPGSQES) are enriched in polar residues. Ser632 carries the phosphoserine modification. A Rho-GAP domain is found at 677 to 866 (CALAQLCERE…LILHQCADIF (190 aa)).

As to quaternary structure, interacts with SH3KBP1/CIN85.

Its subcellular location is the cytoplasm. It localises to the membrane. Functionally, rho GTPase-activating protein which may be involved in clathrin-mediated endocytosis. GTPase activators for the Rho-type GTPases act by converting them to an inactive GDP-bound state. Has activity toward CDC42 and RAC1. This chain is Rho GTPase-activating protein 27 (Arhgap27), found in Rattus norvegicus (Rat).